Here is an 83-residue protein sequence, read N- to C-terminus: Arminin 3b (83 aa).

An N-terminal signal peptide occupies residues 1-18 (MKIVFAILFLTFIALTYA). Positions 19-57 (RSFEDLKEEIKNEIEKEIFDDLEEESDELDNNVKKFNDA) are excised as a propeptide. The residue at position 80 (serine 80) is a Serine amide.

Belongs to the arminin family. Expressed in entodermal epithelium along the body column.

It localises to the secreted. The protein resides in the target cell membrane. In terms of biological role, antimicrobial peptide with a broad-spectrum antimicrobial activity. Keeps its antibacterial activity under a wide range of salt concentrations that mimic physiological conditions of human blood, which is surprising, since Hydra is an obligate freshwater animal with nearly no salt tolerance. Does not affect red blood cells. This chain is Arminin 3b, found in Hydra vulgaris (Hydra).